Here is a 199-residue protein sequence, read N- to C-terminus: ATP synthase subunit b (199 aa).

A helical transmembrane segment spans residues 5–25 (SFVTTLSVCVMILGLAALGFA).

It belongs to the ATPase B chain family. In terms of assembly, F-type ATPases have 2 components, F(1) - the catalytic core - and F(0) - the membrane proton channel. F(1) has five subunits: alpha(3), beta(3), gamma(1), delta(1), epsilon(1). F(0) has three main subunits: a(1), b(2) and c(10-14). The alpha and beta chains form an alternating ring which encloses part of the gamma chain. F(1) is attached to F(0) by a central stalk formed by the gamma and epsilon chains, while a peripheral stalk is formed by the delta and b chains.

The protein resides in the cell inner membrane. F(1)F(0) ATP synthase produces ATP from ADP in the presence of a proton or sodium gradient. F-type ATPases consist of two structural domains, F(1) containing the extramembraneous catalytic core and F(0) containing the membrane proton channel, linked together by a central stalk and a peripheral stalk. During catalysis, ATP synthesis in the catalytic domain of F(1) is coupled via a rotary mechanism of the central stalk subunits to proton translocation. Functionally, component of the F(0) channel, it forms part of the peripheral stalk, linking F(1) to F(0). The chain is ATP synthase subunit b from Citrifermentans bemidjiense (strain ATCC BAA-1014 / DSM 16622 / JCM 12645 / Bem) (Geobacter bemidjiensis).